We begin with the raw amino-acid sequence, 57 residues long: uncharacterized protein (57 aa).

Positions 1-57 (MDDTLPKQMTPTDTSPLKEEQAHCNNKTLENQPKNINDNKCTDSQNTDLQNTEPSKV) are disordered. Residues 23-57 (HCNNKTLENQPKNINDNKCTDSQNTDLQNTEPSKV) show a composition bias toward polar residues.

This is an uncharacterized protein from Ornithodoros (relapsing fever ticks).